A 548-amino-acid polypeptide reads, in one-letter code: Tryprostatin B 6-hydroxylase (548 aa).

The next 3 membrane-spanning stretches (helical) occupy residues methionine 5–phenylalanine 25, tryptophan 35–alanine 54, and leucine 73–phenylalanine 93. Cysteine 491 contacts heme.

Belongs to the cytochrome P450 family. It depends on heme as a cofactor.

Its subcellular location is the membrane. The catalysed reaction is tryprostatin B + reduced [NADPH--hemoprotein reductase] + O2 = 6-hydroxytryprostatin B + oxidized [NADPH--hemoprotein reductase] + H2O + H(+). The protein operates within mycotoxin biosynthesis. Cytochrome P450 monooxygenase; part of the gene cluster that mediates the biosynthesis of fumitremorgins, indole alkaloids that carry not only intriguing chemical structures, but also interesting biological and pharmacological activities. The biosynthesis of fumitremorgin-type alkaloids begins by condensation of the two amino acids L-tryptophan and L-proline to brevianamide F, catalyzed by the non-ribosomal peptide synthetase ftmPS/ftmA. Brevianamide F is then prenylated by the prenyltransferase ftmPT1/ftmB in the presence of dimethylallyl diphosphate, resulting in the formation of tryprostatin B. The three cytochrome P450 monooxygenases, ftmP450-1/ftmC, ftmP450-2/ftmE and ftmP450-3/FtmG, are responsible for the conversion of tryprostatin B to 6-hydroxytryprostatin B, tryprostatin A to fumitremorgin C and fumitremorgin C to 12,13-dihydroxyfumitremorgin C, respectively. The putative methyltransferase ftmMT/ftmD is expected for the conversion of 6-hydroxytryprostatin B to tryprostatin A. FtmPT2/FtmH catalyzes the prenylation of 12,13-dihydroxyfumitre-morgin C in the presence of dimethylallyl diphosphate, resulting in the formation of fumitremorgin B. Fumitremorgin B is further converted to verruculogen by ftmOx1/ftmF via the insertion of an endoperoxide bond between the two prenyl moieties. Finally, verruculogen is further converted to fumitremorgin A by the verruculogen prenyltransferase ftmPT3. The polypeptide is Tryprostatin B 6-hydroxylase (Neosartorya fischeri (strain ATCC 1020 / DSM 3700 / CBS 544.65 / FGSC A1164 / JCM 1740 / NRRL 181 / WB 181) (Aspergillus fischerianus)).